A 257-amino-acid polypeptide reads, in one-letter code: Thiazole synthase (257 aa).

The active-site Schiff-base intermediate with DXP is the Lys-96. Residues Gly-157, 184-185 (AG), and 206-207 (NT) contribute to the 1-deoxy-D-xylulose 5-phosphate site.

The protein belongs to the ThiG family. As to quaternary structure, homotetramer. Forms heterodimers with either ThiH or ThiS.

It is found in the cytoplasm. The enzyme catalyses [ThiS sulfur-carrier protein]-C-terminal-Gly-aminoethanethioate + 2-iminoacetate + 1-deoxy-D-xylulose 5-phosphate = [ThiS sulfur-carrier protein]-C-terminal Gly-Gly + 2-[(2R,5Z)-2-carboxy-4-methylthiazol-5(2H)-ylidene]ethyl phosphate + 2 H2O + H(+). It functions in the pathway cofactor biosynthesis; thiamine diphosphate biosynthesis. Catalyzes the rearrangement of 1-deoxy-D-xylulose 5-phosphate (DXP) to produce the thiazole phosphate moiety of thiamine. Sulfur is provided by the thiocarboxylate moiety of the carrier protein ThiS. In vitro, sulfur can be provided by H(2)S. This Rhizobium etli (strain ATCC 51251 / DSM 11541 / JCM 21823 / NBRC 15573 / CFN 42) protein is Thiazole synthase.